The chain runs to 410 residues: Serine hydroxymethyltransferase (410 aa).

(6S)-5,6,7,8-tetrahydrofolate contacts are provided by residues Leu-116 and 120 to 122 (GHL). Lys-225 carries the post-translational modification N6-(pyridoxal phosphate)lysine. 349–351 (SPF) contributes to the (6S)-5,6,7,8-tetrahydrofolate binding site.

The protein belongs to the SHMT family. In terms of assembly, homodimer. Pyridoxal 5'-phosphate is required as a cofactor.

The protein resides in the cytoplasm. It carries out the reaction (6R)-5,10-methylene-5,6,7,8-tetrahydrofolate + glycine + H2O = (6S)-5,6,7,8-tetrahydrofolate + L-serine. The protein operates within one-carbon metabolism; tetrahydrofolate interconversion. Its pathway is amino-acid biosynthesis; glycine biosynthesis; glycine from L-serine: step 1/1. Its function is as follows. Catalyzes the reversible interconversion of serine and glycine with tetrahydrofolate (THF) serving as the one-carbon carrier. This reaction serves as the major source of one-carbon groups required for the biosynthesis of purines, thymidylate, methionine, and other important biomolecules. Also exhibits THF-independent aldolase activity toward beta-hydroxyamino acids, producing glycine and aldehydes, via a retro-aldol mechanism. This Leuconostoc citreum (strain KM20) protein is Serine hydroxymethyltransferase.